The primary structure comprises 252 residues: Imidazole glycerol phosphate synthase subunit HisF (252 aa).

Residues aspartate 11 and aspartate 130 contribute to the active site.

Belongs to the HisA/HisF family. Heterodimer of HisH and HisF.

It is found in the cytoplasm. The enzyme catalyses 5-[(5-phospho-1-deoxy-D-ribulos-1-ylimino)methylamino]-1-(5-phospho-beta-D-ribosyl)imidazole-4-carboxamide + L-glutamine = D-erythro-1-(imidazol-4-yl)glycerol 3-phosphate + 5-amino-1-(5-phospho-beta-D-ribosyl)imidazole-4-carboxamide + L-glutamate + H(+). It participates in amino-acid biosynthesis; L-histidine biosynthesis; L-histidine from 5-phospho-alpha-D-ribose 1-diphosphate: step 5/9. Functionally, IGPS catalyzes the conversion of PRFAR and glutamine to IGP, AICAR and glutamate. The HisF subunit catalyzes the cyclization activity that produces IGP and AICAR from PRFAR using the ammonia provided by the HisH subunit. This chain is Imidazole glycerol phosphate synthase subunit HisF, found in Staphylococcus saprophyticus subsp. saprophyticus (strain ATCC 15305 / DSM 20229 / NCIMB 8711 / NCTC 7292 / S-41).